The primary structure comprises 414 residues: Succinylornithine transaminase (414 aa).

N6-(pyridoxal phosphate)lysine is present on Lys-260.

Belongs to the class-III pyridoxal-phosphate-dependent aminotransferase family. AstC subfamily. Pyridoxal 5'-phosphate is required as a cofactor.

The catalysed reaction is N(2)-succinyl-L-ornithine + 2-oxoglutarate = N-succinyl-L-glutamate 5-semialdehyde + L-glutamate. The protein operates within amino-acid degradation; L-arginine degradation via AST pathway; L-glutamate and succinate from L-arginine: step 3/5. In terms of biological role, catalyzes the transamination of N(2)-succinylornithine and alpha-ketoglutarate into N(2)-succinylglutamate semialdehyde and glutamate. Can also act as an acetylornithine aminotransferase. In Yersinia pseudotuberculosis serotype O:1b (strain IP 31758), this protein is Succinylornithine transaminase.